A 183-amino-acid polypeptide reads, in one-letter code: Cuticle protein 2 (183 aa).

Residues 1 to 15 (MKLIVVAALIGVCAG) form the signal peptide. The 64-residue stretch at 58 to 121 (SQGFQYVYDT…AQGAHLPTPP (64 aa)) folds into the Chitin-binding type R&amp;R domain.

The sequence is that of Cuticle protein 2 from Lonomia obliqua (Moth).